Reading from the N-terminus, the 329-residue chain is PDZ and LIM domain protein 1 (329 aa).

An N-acetylthreonine modification is found at Thr-2. Residues 3-85 form the PDZ domain; sequence TQQIDLQGPG…NLTLTVARSE (83 aa). A phosphoserine mark is found at Ser-90 and Ser-130. Residue Tyr-144 is modified to Phosphotyrosine. In terms of domain architecture, LIM zinc-binding spans 258-317; it reads PMCDKCGTGIVGVFVKLRDRHRHPECYVCTDCGTNLKQKGHFFVEDQIYCEKHARERVTP. Zn(2+) is bound by residues Cys-260, Cys-263, His-280, Cys-283, Cys-286, Cys-289, Cys-307, and His-310. Thr-316 is subject to Phosphothreonine. Tyr-321 carries the phosphotyrosine modification.

Interacts with ACTN1, ACTN2 and ACTN4. Interacts with PDLIM4. Strongly expressed in the heart and skeletal muscle, moderately expressed in the spleen, small intestine, colon, placenta, and lung. A lower level expression is seen in liver, thymus, kidney, prostate and pancreas and is not found in the brain, testis, ovary, and peripheral blood leukocytes.

It localises to the cytoplasm. The protein localises to the cytoskeleton. Its subcellular location is the myofibril. It is found in the sarcomere. The protein resides in the z line. In terms of biological role, cytoskeletal protein that may act as an adapter that brings other proteins (like kinases) to the cytoskeleton. Involved in assembly, disassembly and directioning of stress fibers in fibroblasts. Required for the localization of ACTN1 and PALLD to stress fibers. Required for cell migration and in maintaining cell polarity of fibroblasts. In Homo sapiens (Human), this protein is PDZ and LIM domain protein 1 (PDLIM1).